The following is a 154-amino-acid chain: Putative F-box protein At2g11200 (154 aa).

The region spanning 5–51 is the F-box domain; it reads TTAMSDLPRDLEEEVLSRVQLASLRAVRTTCKKWNRRLSKYRFTKKY.

The sequence is that of Putative F-box protein At2g11200 from Arabidopsis thaliana (Mouse-ear cress).